Consider the following 564-residue polypeptide: Potassium-transporting ATPase potassium-binding subunit (564 aa).

Transmembrane regions (helical) follow at residues 4–24, 67–87, 135–155, 179–199, 258–278, 286–306, 382–402, 420–440, 487–507, and 534–554; these read YDYLLLLAFFAIVLLPAPWLG, TLALLAFNLAGFLLLFAVLLL, IGLTVQNFVSAATGLAVLVAL, LYGLLPLCLVLALLLVWQGVP, FEVASIILIPVALVFTFGHYV, AIIACMLALFLIGGSTALWSE, AGLYGMLLFVLIAVFLAGLMI, LLVATLLVMPVGVLILGAIAA, VMIGLAMLIGRFGYILPVLAL, and LLLLTILLVGGLTFLPTLALG.

It belongs to the KdpA family. In terms of assembly, the system is composed of three essential subunits: KdpA, KdpB and KdpC.

It is found in the cell inner membrane. Functionally, part of the high-affinity ATP-driven potassium transport (or Kdp) system, which catalyzes the hydrolysis of ATP coupled with the electrogenic transport of potassium into the cytoplasm. This subunit binds the periplasmic potassium ions and delivers the ions to the membrane domain of KdpB through an intramembrane tunnel. This Pseudomonas entomophila (strain L48) protein is Potassium-transporting ATPase potassium-binding subunit.